A 287-amino-acid chain; its full sequence is Acetyl-coenzyme A carboxylase carboxyl transferase subunit beta (287 aa).

Positions 28–287 constitute a CoA carboxyltransferase N-terminal domain; sequence LWKKCPKCEN…ILSLLTNKVA (260 aa). Zn(2+)-binding residues include Cys-32, Cys-35, Cys-51, and Cys-54. The C4-type zinc-finger motif lies at 32–54; that stretch reads CPKCENVLYRPELEKNLDVCPKC.

The protein belongs to the AccD/PCCB family. Acetyl-CoA carboxylase is a heterohexamer composed of biotin carboxyl carrier protein (AccB), biotin carboxylase (AccC) and two subunits each of ACCase subunit alpha (AccA) and ACCase subunit beta (AccD). It depends on Zn(2+) as a cofactor.

It localises to the cytoplasm. The catalysed reaction is N(6)-carboxybiotinyl-L-lysyl-[protein] + acetyl-CoA = N(6)-biotinyl-L-lysyl-[protein] + malonyl-CoA. It participates in lipid metabolism; malonyl-CoA biosynthesis; malonyl-CoA from acetyl-CoA: step 1/1. Functionally, component of the acetyl coenzyme A carboxylase (ACC) complex. Biotin carboxylase (BC) catalyzes the carboxylation of biotin on its carrier protein (BCCP) and then the CO(2) group is transferred by the transcarboxylase to acetyl-CoA to form malonyl-CoA. This Marinomonas sp. (strain MWYL1) protein is Acetyl-coenzyme A carboxylase carboxyl transferase subunit beta.